A 366-amino-acid polypeptide reads, in one-letter code: Ribosomal RNA large subunit methyltransferase M (366 aa).

S-adenosyl-L-methionine is bound by residues S188, 221-224, D240, D260, and D277; that span reads CPGG. The Proton acceptor role is filled by K306.

It belongs to the class I-like SAM-binding methyltransferase superfamily. RNA methyltransferase RlmE family. RlmM subfamily. In terms of assembly, monomer.

Its subcellular location is the cytoplasm. The catalysed reaction is cytidine(2498) in 23S rRNA + S-adenosyl-L-methionine = 2'-O-methylcytidine(2498) in 23S rRNA + S-adenosyl-L-homocysteine + H(+). In terms of biological role, catalyzes the 2'-O-methylation at nucleotide C2498 in 23S rRNA. This chain is Ribosomal RNA large subunit methyltransferase M, found in Escherichia coli O127:H6 (strain E2348/69 / EPEC).